A 489-amino-acid chain; its full sequence is Cytochrome P450 monooxygenase AMT3 (489 aa).

The chain crosses the membrane as a helical span at residues 292–312 (LFMVAGTETTITALSGLVFLL). Cysteine 436 lines the heme pocket.

This sequence belongs to the cytochrome P450 family. The cofactor is heme.

It is found in the membrane. Its pathway is mycotoxin biosynthesis. Cytochrome P450 monooxygenase; part of the gene clusters that mediate the biosynthesis of AM-toxins, host-selective toxins (HSTs) causing Alternaria blotch on apple, a worldwide distributed disease. AM-toxins are cyclic depsipeptides containing the 3 residues 2-hydroxy-isovaleric acid (2-HIV), dehydroalanine, L-alanine which are common for all 3 AM-toxins I to III. The fourth precursor is L-alpha-amino-methoxyphenyl-valeric acid (L-Amv) for AM-toxin I, L-alpha-amino-phenyl-valeric acid (L-Apv) for AM-toxin II, and L-alpha-amino-hydroxyphenyl-valeric acid (L-Ahv) for AM-toxin III. AM-toxins have two target sites for affecting susceptible apple cells; they cause invagination of the plasma membrane and electrolyte loss and chloroplast disorganization. The non-ribosomal peptide synthetase AMT1 contains 4 catalytic modules and is responsible for activation of each residue in AM-toxin. The aldo-keto reductase AMT2 catalyzes the conversion of 2-keto-isovaleric acid (2-KIV) to 2-hydroxy-isovaleric acid (2-HIV), one of the precursor residues incorporated by AMT1 during AM-toxin biosynthesis, by reduction of its ketone to an alcohol. The cytochrome P450 monooxygenase AMT3 and the thioesterase AMT4 are also important for AM-toxin production, but their exact function within the AM-toxin biosynthesis are not known yet. Up to 21 proteins (including AMT1 to AMT4) are predicted to be involved in AM-toxin biosynthesis since their expression ishighly up-regulated in AM-toxin-producing cultures. This Alternaria alternata (Alternaria rot fungus) protein is Cytochrome P450 monooxygenase AMT3.